Consider the following 469-residue polypeptide: F-box only protein 3 (469 aa).

The F-box domain occupies 10 to 56 (PLTLESLPTDPLLLILSFLDYRDLINCCYVSRRLSQLSSHDPLWRRH). The 131-residue stretch at 278-408 (VATTGDITVS…FHMACPTFRV (131 aa)) folds into the ApaG domain. A compositionally biased stretch (acidic residues) spans 419–449 (EYEEMEEEEEEEEEEDDDDSADMDESDDDEE). Residues 419 to 454 (EYEEMEEEEEEEEEEDDDDSADMDESDDDEEERQRR) form a disordered region.

In terms of assembly, part of a SCF (SKP1-cullin-F-box) protein ligase complex SCF(FBXO3) consisting of FBXO3, SKP1, CUL1 and RBX1. Interacts with PML, interaction is direct and takes place either alone or within the SCF complex.

It is found in the nucleus. The protein operates within protein modification; protein ubiquitination. Its function is as follows. Substrate recognition component of the SCF (SKP1-CUL1-F-box protein)-type E3 ubiquitin ligase complex, SCF(FBXO3), which mediates the ubiquitination and subsequent proteasomal degradation of target proteins. Mediates the ubiquitination of HIPK2 and probably that of EP300, leading to rapid degradation by the proteasome. In the presence of PML, HIPK2 ubiquitination still occurs, but degradation is prevented. PML, HIPK2 and FBXO3 may act synergically to activate p53/TP53-dependent transactivation. The SCF(FBXO3) also acts as a regulator of inflammation by mediating ubiquitination and degradation of FBXL2 in response to lipopolysaccharide (LPS). The SCF(FBXO3) complex specifically recognizes FBXL2 phosphorylated at 'Thr-404' and promotes its ubiquitination. The chain is F-box only protein 3 (FBXO3) from Bos taurus (Bovine).